The following is a 510-amino-acid chain: uncharacterized protein (510 aa).

This sequence belongs to the phage portal family. PBSX subfamily.

This is an uncharacterized protein from Bacillus subtilis (strain 168).